The following is a 325-amino-acid chain: Hydroxymethylglutaryl-CoA lyase, mitochondrial (325 aa).

A mitochondrion-targeting transit peptide spans 1 to 27 (MAAMTKALPRRLVGLASLRAVSTSSMD). The 268-residue stretch at 33 to 300 (VKIVEVGPRD…HTGVNLQKLL (268 aa)) folds into the Pyruvate carboxyltransferase domain. Arg-41 contacts substrate. Asp-42 serves as a coordination point for a divalent metal cation. Position 48 is an N6-acetyllysine; alternate (Lys-48). Residue Lys-48 is modified to N6-succinyllysine; alternate. Lys-111 carries the post-translational modification N6-acetyllysine. 2 positions are modified to N6-acetyllysine; alternate: Lys-137 and Lys-179. N6-succinyllysine; alternate is present on residues Lys-137 and Lys-179. A divalent metal cation contacts are provided by His-233 and His-235. The active site involves Cys-266. Asn-275 contributes to the a divalent metal cation binding site. The short motif at 323-325 (CKL) is the Microbody targeting signal element. Lys-324 bears the N6-acetyllysine mark.

The protein belongs to the HMG-CoA lyase family. In terms of assembly, homodimer; disulfide-linked. Can also form homotetramers.

It is found in the mitochondrion matrix. The protein localises to the peroxisome. The catalysed reaction is (3S)-3-hydroxy-3-methylglutaryl-CoA = acetoacetate + acetyl-CoA. It participates in metabolic intermediate metabolism; (S)-3-hydroxy-3-methylglutaryl-CoA degradation; acetoacetate from (S)-3-hydroxy-3-methylglutaryl-CoA: step 1/1. Its function is as follows. Mitochondrial 3-hydroxy-3-methylglutaryl-CoA lyase that catalyzes a cation-dependent cleavage of (S)-3-hydroxy-3-methylglutaryl-CoA into acetyl-CoA and acetoacetate, a key step in ketogenesis. Terminal step in leucine catabolism. Ketone bodies (beta-hydroxybutyrate, acetoacetate and acetone) are essential as an alternative source of energy to glucose, as lipid precursors and as regulators of metabolism. This chain is Hydroxymethylglutaryl-CoA lyase, mitochondrial (HMGCL), found in Macaca fascicularis (Crab-eating macaque).